Consider the following 123-residue polypeptide: Small ribosomal subunit protein uS13 (123 aa).

The tract at residues 96 to 123 is disordered; sequence GLPVRGQRTKTNARTRKGPKKTVAGKKK.

It belongs to the universal ribosomal protein uS13 family. As to quaternary structure, part of the 30S ribosomal subunit. Forms a loose heterodimer with protein S19. Forms two bridges to the 50S subunit in the 70S ribosome.

Its function is as follows. Located at the top of the head of the 30S subunit, it contacts several helices of the 16S rRNA. In the 70S ribosome it contacts the 23S rRNA (bridge B1a) and protein L5 of the 50S subunit (bridge B1b), connecting the 2 subunits; these bridges are implicated in subunit movement. Contacts the tRNAs in the A and P-sites. This chain is Small ribosomal subunit protein uS13, found in Nocardia farcinica (strain IFM 10152).